The chain runs to 231 residues: 2-C-methyl-D-erythritol 4-phosphate cytidylyltransferase (231 aa).

This sequence belongs to the IspD/TarI cytidylyltransferase family. IspD subfamily.

It catalyses the reaction 2-C-methyl-D-erythritol 4-phosphate + CTP + H(+) = 4-CDP-2-C-methyl-D-erythritol + diphosphate. The protein operates within isoprenoid biosynthesis; isopentenyl diphosphate biosynthesis via DXP pathway; isopentenyl diphosphate from 1-deoxy-D-xylulose 5-phosphate: step 2/6. Functionally, catalyzes the formation of 4-diphosphocytidyl-2-C-methyl-D-erythritol from CTP and 2-C-methyl-D-erythritol 4-phosphate (MEP). The protein is 2-C-methyl-D-erythritol 4-phosphate cytidylyltransferase of Fusobacterium nucleatum subsp. nucleatum (strain ATCC 25586 / DSM 15643 / BCRC 10681 / CIP 101130 / JCM 8532 / KCTC 2640 / LMG 13131 / VPI 4355).